The primary structure comprises 268 residues: Thymidylate synthase (268 aa).

Arg-27 is a dUMP binding site. A (6R)-5,10-methylene-5,6,7,8-tetrahydrofolate-binding site is contributed by His-57. 132-133 (RR) provides a ligand contact to dUMP. Cys-152 (nucleophile) is an active-site residue. DUMP contacts are provided by residues 172–175 (RSAD), Asn-183, and 213–215 (HVY). Asp-175 lines the (6R)-5,10-methylene-5,6,7,8-tetrahydrofolate pocket. (6R)-5,10-methylene-5,6,7,8-tetrahydrofolate is bound at residue Ala-267.

The protein belongs to the thymidylate synthase family. Bacterial-type ThyA subfamily. Homodimer.

The protein resides in the cytoplasm. The catalysed reaction is dUMP + (6R)-5,10-methylene-5,6,7,8-tetrahydrofolate = 7,8-dihydrofolate + dTMP. Its pathway is pyrimidine metabolism; dTTP biosynthesis. Catalyzes the reductive methylation of 2'-deoxyuridine-5'-monophosphate (dUMP) to 2'-deoxythymidine-5'-monophosphate (dTMP) while utilizing 5,10-methylenetetrahydrofolate (mTHF) as the methyl donor and reductant in the reaction, yielding dihydrofolate (DHF) as a by-product. This enzymatic reaction provides an intracellular de novo source of dTMP, an essential precursor for DNA biosynthesis. The protein is Thymidylate synthase of Kineococcus radiotolerans (strain ATCC BAA-149 / DSM 14245 / SRS30216).